We begin with the raw amino-acid sequence, 529 residues long: Glycylpeptide N-tetradecanoyltransferase 2 (529 aa).

The interval 1–82 (MAEDSESAAS…QEIKIQQSSK (82 aa)) is disordered. Residues 15–32 (ELDDQDTCGIDGDNEEET) are compositionally biased toward acidic residues. S38 is modified (phosphoserine). Positions 46–57 (KKKKKKQKRKKE) are enriched in basic residues. The segment covering 61-82 (SGGTKSDSASDSQEIKIQQSSK) has biased composition (polar residues). Tetradecanoyl-CoA contacts are provided by W153, L281, V283, S289, R291, V292, and A293.

It belongs to the NMT family.

It localises to the cytoplasm. It is found in the membrane. It catalyses the reaction N-terminal glycyl-[protein] + tetradecanoyl-CoA = N-tetradecanoylglycyl-[protein] + CoA + H(+). The catalysed reaction is N-terminal glycyl-L-lysyl-[protein] + tetradecanoyl-CoA = N-terminal glycyl-(N(6)-tetradecanoyl)-L-lysyl-[protein] + CoA + H(+). Its function is as follows. Adds a myristoyl group to the N-terminal glycine residue of certain cellular and viral proteins. Also able to mediate N-terminal lysine myristoylation of proteins: catalyzes myristoylation of ARF6 on both 'Gly-2' and 'Lys-3'. Lysine myristoylation is required to maintain ARF6 on membranes during the GTPase cycle. The protein is Glycylpeptide N-tetradecanoyltransferase 2 (Nmt2) of Mus musculus (Mouse).